The following is a 124-amino-acid chain: Protein BEX3 (124 aa).

The tract at residues 1–56 (MANVHQENEEMEQPLQNGQEDRPVGGGEGHQPAANNNNNNHNHNHNHHRRGQARRL) is disordered. A compositionally biased stretch (basic residues) spans 42–53 (NHNHNHHRRGQA). Residues 81 to 106 (EMFMEEMREIRRKLRELQLRNCLRIL) form an interaction with p75NTR/NGFR region. The interaction with 14-3-3 epsilon stretch occupies residues 81–124 (EMFMEEMREIRRKLRELQLRNCLRILMGELSNHHDHHDEFCLMP). The short motif at 90-100 (IRRKLRELQLR) is the Nuclear export signal element. The his cluster stretch occupies residues 113–117 (HHDHH). Residue Cys121 participates in Zn(2+) binding.

Belongs to the BEX family. Self-associates. Binds to the DEATH domain of p75NTR/NGFR. Interacts with 14-3-3 epsilon (YWHAE). Interacts with DIABLO/SMAC. Ubiquitinated. Degraded by the proteasome. In terms of tissue distribution, widely expressed.

It is found in the nucleus. The protein resides in the cytoplasm. The protein localises to the cytosol. In terms of biological role, may be a signaling adapter molecule involved in NGFR/p75NTR-mediated apoptosis induced by NGF. Plays a role in zinc-triggered neuronal death. In absence of reductive stress, acts as a pseudosubstrate for the CRL2(FEM1B) complex: associates with FEM1B via zinc, thereby preventing association between FEM1B and its substrates. The polypeptide is Protein BEX3 (Mus musculus (Mouse)).